The primary structure comprises 350 residues: 3-dehydroquinate synthase (350 aa).

NAD(+) is bound by residues 63-68 (DGEEYK), 97-101 (GVIGD), 121-122 (TT), lysine 134, lysine 143, and 161-164 (FLKT). Zn(2+) contacts are provided by glutamate 176, histidine 235, and histidine 252.

Belongs to the sugar phosphate cyclases superfamily. Dehydroquinate synthase family. The cofactor is Co(2+). Zn(2+) serves as cofactor. It depends on NAD(+) as a cofactor.

The protein localises to the cytoplasm. It carries out the reaction 7-phospho-2-dehydro-3-deoxy-D-arabino-heptonate = 3-dehydroquinate + phosphate. The protein operates within metabolic intermediate biosynthesis; chorismate biosynthesis; chorismate from D-erythrose 4-phosphate and phosphoenolpyruvate: step 2/7. Functionally, catalyzes the conversion of 3-deoxy-D-arabino-heptulosonate 7-phosphate (DAHP) to dehydroquinate (DHQ). The chain is 3-dehydroquinate synthase from Sulfurovum sp. (strain NBC37-1).